Consider the following 464-residue polypeptide: Anthranilate synthase component 1 (464 aa).

L-tryptophan is bound by residues Ser41 and 236 to 238 (PYM). 271–272 (GT) contacts chorismate. Glu298 contributes to the Mg(2+) binding site. Residues Tyr386, Arg406, 420-422 (GAG), and Gly422 each bind chorismate. Glu435 is a binding site for Mg(2+).

The protein belongs to the anthranilate synthase component I family. Heterotetramer consisting of two non-identical subunits: a beta subunit (TrpG) and a large alpha subunit (TrpE). The cofactor is Mg(2+).

It carries out the reaction chorismate + L-glutamine = anthranilate + pyruvate + L-glutamate + H(+). The protein operates within amino-acid biosynthesis; L-tryptophan biosynthesis; L-tryptophan from chorismate: step 1/5. With respect to regulation, feedback inhibited by tryptophan. Part of a heterotetrameric complex that catalyzes the two-step biosynthesis of anthranilate, an intermediate in the biosynthesis of L-tryptophan. In the first step, the glutamine-binding beta subunit (TrpG) of anthranilate synthase (AS) provides the glutamine amidotransferase activity which generates ammonia as a substrate that, along with chorismate, is used in the second step, catalyzed by the large alpha subunit of AS (TrpE) to produce anthranilate. In the absence of TrpG, TrpE can synthesize anthranilate directly from chorismate and high concentrations of ammonia. This Methanothermobacter thermautotrophicus (strain ATCC 29096 / DSM 1053 / JCM 10044 / NBRC 100330 / Delta H) (Methanobacterium thermoautotrophicum) protein is Anthranilate synthase component 1 (trpE).